A 507-amino-acid polypeptide reads, in one-letter code: ATP synthase subunit alpha, chloroplastic (507 aa).

An ATP-binding site is contributed by 170-177 (GDRQTGKT).

The protein belongs to the ATPase alpha/beta chains family. As to quaternary structure, F-type ATPases have 2 components, CF(1) - the catalytic core - and CF(0) - the membrane proton channel. CF(1) has five subunits: alpha(3), beta(3), gamma(1), delta(1), epsilon(1). CF(0) has four main subunits: a, b, b' and c.

The protein localises to the plastid. Its subcellular location is the chloroplast thylakoid membrane. It carries out the reaction ATP + H2O + 4 H(+)(in) = ADP + phosphate + 5 H(+)(out). Functionally, produces ATP from ADP in the presence of a proton gradient across the membrane. The alpha chain is a regulatory subunit. The chain is ATP synthase subunit alpha, chloroplastic from Atropa belladonna (Belladonna).